Reading from the N-terminus, the 325-residue chain is Iodotyrosine dehalogenase 1 homolog (325 aa).

The chain crosses the membrane as a helical span at residues 42–62; that stretch reads VLNVLFTLGVILFVIYQVASL. Residues 63–325 are Cytoplasmic-facing; the sequence is LHRMNKRVEK…KPVEHITKLY (263 aa). FMN contacts are provided by residues 135–139, 163–164, 273–275, and Arg315; these read RRSCR, SV, and VTS.

This sequence belongs to the nitroreductase family. Requires FMN as cofactor. In terms of tissue distribution, expressed in body-wall, anal depressor and vulval muscles.

The protein localises to the membrane. Functionally, may contribute to coordination of muscle contraction as regulatory subunit of the nonessential sup-9 potassium channel complex. May act downstream of sup-10. In Caenorhabditis elegans, this protein is Iodotyrosine dehalogenase 1 homolog.